The following is a 402-amino-acid chain: 26S proteasome regulatory subunit 8 (402 aa).

Gly186–Thr193 provides a ligand contact to ATP.

The protein belongs to the AAA ATPase family.

It localises to the cytoplasm. The protein resides in the nucleus. Its function is as follows. The 26S proteasome is involved in the ATP-dependent degradation of ubiquitinated proteins. The regulatory (or ATPase) complex confers ATP dependency and substrate specificity to the 26S complex. This Manduca sexta (Tobacco hawkmoth) protein is 26S proteasome regulatory subunit 8.